The primary structure comprises 328 residues: AA9 family lytic polysaccharide monooxygenase A (328 aa).

The first 21 residues, 1-21 (MPSTKVAALSAVLALASTVAG), serve as a signal peptide directing secretion. H22 contacts Cu(2+). Position 22 is a methylhistidine (H22). Disulfide bonds link C77–C199 and C118–C122. An N-linked (GlcNAc...) asparagine glycan is attached at N80. H107 serves as a coordination point for Cu(2+). 2 N-linked (GlcNAc...) asparagine glycosylation sites follow: N121 and N159. H185 and Q194 together coordinate O2. Y196 provides a ligand contact to Cu(2+). S235 and S237 each carry an O-linked (Man...) serine glycan. T238 and T245 each carry an O-linked (Man...) threonine glycan.

It belongs to the polysaccharide monooxygenase AA9 family. Cu(2+) serves as cofactor. In terms of processing, the catalytically essential N-terminal histidine His-22 is post-translationally modified by methylation to prevent protonation of the histidine side chain, and protect the critical active site of the enzyme from oxidative damage.

It is found in the secreted. It catalyses the reaction [(1-&gt;4)-beta-D-glucosyl]n+m + reduced acceptor + O2 = 4-dehydro-beta-D-glucosyl-[(1-&gt;4)-beta-D-glucosyl]n-1 + [(1-&gt;4)-beta-D-glucosyl]m + acceptor + H2O.. Lytic polysaccharide monooxygenase (LPMO) that depolymerizes crystalline and amorphous polysaccharides via the oxidation of scissile alpha- or beta-(1-4)-glycosidic bonds, yielding C1 and C4 oxidation products. Catalysis by LPMOs requires the reduction of the active-site copper from Cu(II) to Cu(I) by a reducing agent and H(2)O(2) or O(2) as a cosubstrate. Shows activity on cellulosic substrates (Avicel, carboxymethylcellulose) and xylan. The protein is AA9 family lytic polysaccharide monooxygenase A of Talaromyces verruculosus (Penicillium verruculosum).